The following is a 538-amino-acid chain: Beta-1-syntrophin (538 aa).

N-acetylalanine is present on Ala2. 2 consecutive PH domains span residues 19-298 (RAQR…SNVN) and 322-433 (EIRH…QGCH). Phosphoserine is present on residues Ser87, Ser126, and Ser205. The PDZ domain maps to 112 to 195 (GVKVLKQELG…EVLLEVKYMR (84 aa)). The interval 205–237 (SPVSEIGWETPPPESPRLGGSTSDPPSSQSFSF) is disordered. Thr214 is subject to Phosphothreonine. 4 positions are modified to phosphoserine: Ser219, Ser232, Ser236, and Ser389. Residues 225-236 (STSDPPSSQSFS) show a composition bias toward low complexity. Residues 482–538 (PYEKLKMSSDDGIRMLYLDFGGKDGEIQLDLHSCPKPIVFIIHSFLSAKITRLGLVA) enclose the SU domain. The segment at 518-538 (PIVFIIHSFLSAKITRLGLVA) is calmodulin-binding.

This sequence belongs to the syntrophin family. In terms of assembly, monomer and homodimer. Interacts with the other members of the syntrophin family SNTA1 and SNTB2; with the sodium channel proteins SCN4A and SCN5A. Interacts with the viral HTLV-1 TAX protein and with dystrophin protein DMD and related proteins DTNA and UTRN. Interacts with DTNB. In terms of processing, phosphorylated by CaM-kinase II. In terms of tissue distribution, ubiquitous.

The protein localises to the cell membrane. It localises to the sarcolemma. The protein resides in the cell junction. It is found in the cytoplasm. Its subcellular location is the cytoskeleton. Adapter protein that binds to and probably organizes the subcellular localization of a variety of membrane proteins. May link various receptors to the actin cytoskeleton and the dystrophin glycoprotein complex. In Homo sapiens (Human), this protein is Beta-1-syntrophin (SNTB1).